Consider the following 349-residue polypeptide: DNA polymerase IV (349 aa).

A UmuC domain is found at 4-185 (IIHIDCDCFY…LPVAKLHGVG (182 aa)). Mg(2+)-binding residues include Asp-8 and Asp-103. Glu-104 is a catalytic residue.

Belongs to the DNA polymerase type-Y family. In terms of assembly, monomer. It depends on Mg(2+) as a cofactor.

It localises to the cytoplasm. The enzyme catalyses DNA(n) + a 2'-deoxyribonucleoside 5'-triphosphate = DNA(n+1) + diphosphate. Poorly processive, error-prone DNA polymerase involved in untargeted mutagenesis. Copies undamaged DNA at stalled replication forks, which arise in vivo from mismatched or misaligned primer ends. These misaligned primers can be extended by PolIV. Exhibits no 3'-5' exonuclease (proofreading) activity. May be involved in translesional synthesis, in conjunction with the beta clamp from PolIII. The sequence is that of DNA polymerase IV from Pseudomonas paraeruginosa (strain DSM 24068 / PA7) (Pseudomonas aeruginosa (strain PA7)).